A 417-amino-acid chain; its full sequence is Cotranscriptional regulator ARB2A (417 aa).

An N-terminal signal peptide occupies residues 1–18; it reads MSISLSSLIFLPIWINMA. Residue N26 is glycosylated (N-linked (GlcNAc...) asparagine). Residues 208–248 form a disordered region; it reads KQKMHKQSSSSDGTDEPAGKRERRDKVSKETKKRRDFYEKY. The segment covering 224–237 has biased composition (basic and acidic residues); the sequence is PAGKRERRDKVSKE. The active-site Nucleophile is the S294. Positions 398-417 are disordered; the sequence is SSSQKPALTRRSHRIKHEEL. The span at 405–417 shows a compositional bias: basic residues; the sequence is LTRRSHRIKHEEL. Residues 414 to 417 carry the Prevents secretion from ER motif; the sequence is HEEL.

Belongs to the ARB2A family. Interacts with AGO2. Found in a complex, composed of AGO2, CHD7 and ARB2A.

Its subcellular location is the nucleus. It is found in the cytoplasm. The protein resides in the endoplasmic reticulum. Its function is as follows. Plays a role in the regulation of alternative splicing, by interacting with AGO2 and CHD7. Seems to be required for stabilizing protein-protein interactions at the chromatin-spliceosome interface. May have hydrolase activity. The protein is Cotranscriptional regulator ARB2A (Arb2a) of Mus musculus (Mouse).